The following is a 264-amino-acid chain: 3-methyl-2-oxobutanoate hydroxymethyltransferase (264 aa).

2 residues coordinate Mg(2+): aspartate 45 and aspartate 84. Residues 45–46 (DS), aspartate 84, and lysine 112 each bind 3-methyl-2-oxobutanoate. Glutamate 114 provides a ligand contact to Mg(2+). Glutamate 181 (proton acceptor) is an active-site residue.

The protein belongs to the PanB family. In terms of assembly, homodecamer; pentamer of dimers. Requires Mg(2+) as cofactor.

It is found in the cytoplasm. It catalyses the reaction 3-methyl-2-oxobutanoate + (6R)-5,10-methylene-5,6,7,8-tetrahydrofolate + H2O = 2-dehydropantoate + (6S)-5,6,7,8-tetrahydrofolate. Its pathway is cofactor biosynthesis; (R)-pantothenate biosynthesis; (R)-pantoate from 3-methyl-2-oxobutanoate: step 1/2. Its function is as follows. Catalyzes the reversible reaction in which hydroxymethyl group from 5,10-methylenetetrahydrofolate is transferred onto alpha-ketoisovalerate to form ketopantoate. In Vibrio cholerae serotype O1 (strain ATCC 39541 / Classical Ogawa 395 / O395), this protein is 3-methyl-2-oxobutanoate hydroxymethyltransferase.